Here is a 267-residue protein sequence, read N- to C-terminus: Myb-related protein Hv1 (267 aa).

2 consecutive HTH myb-type domains span residues 9–61 (KAHT…INYL) and 62–116 (RPDL…RRKL). 2 DNA-binding regions (H-T-H motif) span residues 37 to 61 (WRSL…INYL) and 89 to 112 (WSLI…NTHI).

In terms of tissue distribution, germinating seed and apical meristem of shoot and root.

Its subcellular location is the nucleus. In terms of biological role, possible transcription activator in response to an external signal. May be involved in the regulation of flavonoid biosynthesis. The chain is Myb-related protein Hv1 (MYB1) from Hordeum vulgare (Barley).